The chain runs to 129 residues: Large ribosomal subunit protein bL19 (129 aa).

Belongs to the bacterial ribosomal protein bL19 family.

Its function is as follows. This protein is located at the 30S-50S ribosomal subunit interface and may play a role in the structure and function of the aminoacyl-tRNA binding site. The chain is Large ribosomal subunit protein bL19 from Methylobacillus flagellatus (strain ATCC 51484 / DSM 6875 / VKM B-1610 / KT).